Reading from the N-terminus, the 265-residue chain is 14-3-3-like protein GF14-D (265 aa).

The interval 244–265 (DANDDGGDEIKEAAAPKEPGDQ) is disordered. Residues 251–265 (DEIKEAAAPKEPGDQ) are compositionally biased toward basic and acidic residues.

It belongs to the 14-3-3 family. Interacts with BZR1. Interacts with ABI5.

Its function is as follows. Is associated with a DNA binding complex that binds to the G box, a well-characterized cis-acting DNA regulatory element found in plant genes. The protein is 14-3-3-like protein GF14-D (GF14D) of Oryza sativa subsp. japonica (Rice).